The primary structure comprises 399 residues: Salivary protein Tsal1 (399 aa).

The signal sequence occupies residues 1 to 22 (MALKLVYGVFTLALLGISSVNA). An N-linked (GlcNAc...) asparagine glycan is attached at asparagine 268.

This sequence belongs to the DNA/RNA non-specific endonuclease family. The cofactor is a divalent metal cation. Saliva (at protein level).

Its subcellular location is the secreted. Its function is as follows. Binds double-stranded DNA (dsDNA) with high affinity. Binds double-stranded RNA. Binds single-stranded DNA with lower affinity and with a preference for purine-rich sequences. Shows residual nuclease activity for dsDNA. May facilitate blood meal intake by lowering the local viscosity created by the release of host DNA. The chain is Salivary protein Tsal1 from Glossina morsitans morsitans (Savannah tsetse fly).